The following is a 559-amino-acid chain: MKKRRSDMIKKGFDRAPHRSLLRAAGVKDEDFDKPFIAVVNSYIDIIPGHVHLQEFGRIVKEAIREAGGVPFEMNTIGVDDGIAMGHIGMRYSLPSREIIADSIETVISAHWFDGMVCIPNCDKITPGMMMAAMRLNIPTIFVSGGPMKAGVTKDGRKISLSSVFEGVGAYLGGTLDEKGLEELERYGCPTCGSCSGMFTANSMNCLAEALGLALPGNGTILAVDPARKELVRQSAKQLMYLIEHDIKPRDIVTEKAIDNAFALDMALGGSTNTVLHTLAIANEAGIDYSLERINEVASRVPHLAKLAPASDVHYIEDLHEAGGVSAVLNELSKKEGALHLDTLTVTGKTLGENIAGCEVKNYDVIRPIDNPYSETGGLTILFGNLAPDGAVIKTGAVQGGITRHEGPAIVFDSQEEALEGIASGKIKPGHVVVIRYEGPKGGPGMPEMLAPTSQIVGMGLGTKVALVTDGRFSGASRGLSVGHVSPEAAEGGPIAFIQDGDIIEIDTVKRTINVKLSDEELERRKANWKGFEPKVKTGYLARYSKHVTSASTGGIMRI.

D81 contacts Mg(2+). Residue C122 participates in [2Fe-2S] cluster binding. D123 and K124 together coordinate Mg(2+). Residue K124 is modified to N6-carboxylysine. C195 provides a ligand contact to [2Fe-2S] cluster. Mg(2+) is bound at residue E448. The active-site Proton acceptor is the S474.

Belongs to the IlvD/Edd family. As to quaternary structure, homodimer. It depends on [2Fe-2S] cluster as a cofactor. Mg(2+) serves as cofactor.

The catalysed reaction is (2R)-2,3-dihydroxy-3-methylbutanoate = 3-methyl-2-oxobutanoate + H2O. It carries out the reaction (2R,3R)-2,3-dihydroxy-3-methylpentanoate = (S)-3-methyl-2-oxopentanoate + H2O. It functions in the pathway amino-acid biosynthesis; L-isoleucine biosynthesis; L-isoleucine from 2-oxobutanoate: step 3/4. The protein operates within amino-acid biosynthesis; L-valine biosynthesis; L-valine from pyruvate: step 3/4. In terms of biological role, functions in the biosynthesis of branched-chain amino acids. Catalyzes the dehydration of (2R,3R)-2,3-dihydroxy-3-methylpentanoate (2,3-dihydroxy-3-methylvalerate) into 2-oxo-3-methylpentanoate (2-oxo-3-methylvalerate) and of (2R)-2,3-dihydroxy-3-methylbutanoate (2,3-dihydroxyisovalerate) into 2-oxo-3-methylbutanoate (2-oxoisovalerate), the penultimate precursor to L-isoleucine and L-valine, respectively. This chain is Dihydroxy-acid dehydratase, found in Geobacillus kaustophilus (strain HTA426).